The sequence spans 1171 residues: MERHRARALGRDSKSSRRKGLQSAPPAGPYEPGEKRPKLHLNIRTLTDDMLDKFASIRIPGSKKERPPLPHLKTVSGISDSSSLSSETMENNPKALPESEVLKLFEKMMEDMNLNEDKKAPLREKDFGIKKEMVMQYINTASKTGSLRSSRQISPQEFLHELKMGYTDERLFTYLESLRVSLTSHPVSWVQSFGHEGLGLLLDILEKLINGQIQEKVVKKTQHKVIQCLRALMNTQYGLERIMSDKRSLSLLAKAMDPRQPAMMADVVKLLSAVCIVGEESILEEVLEALTSAGEERKIDRFFSIVEGLRHNSVNLQVACMQLINALVTSPDDLDFRLHLRNEFMRCGLKEILPNLKGIKNDGLDIQLKVFDEHKEEDLSEFFHRLEDIRAELDEASDVYSMLWDTVKETRAEGHFLSILQHLLLIRNDRFIREQYFKLIDECVSQIVLHRDGTDPDFTYRKRLDLDLSQFVDVCIDQAKLDEWEEKASEHCKKFEKECTDHQETQAQLQKREAKINELQAELQAFKSQFGALPPGTKIPLQPSVEGEAGPSALPPAPPALSGGVPPPPPPPPPPPPPLPGMPMPFGGPVPPPPPLGFLGGQSSIPLNLPFGLKPKKEFKPEISMRRLNWLKIGPNEMSENCFWIKVNENKYENRDLLCKLENTFCCQEKEKRNTNDFDEKKVIKKRMKELKFLDPKIAQNLSIFLSSFRVPYEKIRTMILEVDETQLSESMIQNLIKHLPDEEQLKSLSQFRSDYNSLCEPEQFAVVMSNVKRLRPRLSAILFKLQFEEQVNNIKPDIMAVSTACEEIKKSKGFSKLLELVLLMGNYMNAGSRNAQTFGFDLSSLCKLKDTKSADQKTTLLHFLVDVCEEKHADILHFVDDLAHLDKASRVSVEMLEKNVKQMGRQLQQLEKNLETFPPPEDLHDKFVIKMSSFVISANEQYEKLSTLLGSMTQLYQSIMGYYAVDMKKVSVEEFFNDLNNFRTSFMLALKENIKKREAAEKEKRARIAKERAEKERLERQQEKKRLLEMKTEGDETGVMDSLLEALQSGAAFRDRRKRTPKLKDIRQSLSPMSQRPVLKVCNHENQKMQLTEGSRPHHSINCNSTRTPVAKELNYNLDTHASTGRIKAVEKEACNAESNKKKEMELLGSVAKSESVPEVEALLARLRAL.

Residues 1–15 (MERHRARALGRDSKS) are compositionally biased toward basic and acidic residues. Positions 1–40 (MERHRARALGRDSKSSRRKGLQSAPPAGPYEPGEKRPKLH) are disordered. Residues 16–39 (SRRKGLQSAPPAGPYEPGEKRPKL) carry the Nuclear localization signal motif. The residue at position 47 (threonine 47) is a Phosphothreonine. A Phosphoserine modification is found at serine 56. Positions 60–95 (PGSKKERPPLPHLKTVSGISDSSSLSSETMENNPKA) are disordered. Low complexity predominate over residues 76 to 86 (SGISDSSSLSS). A GBD/FH3 domain is found at 93 to 455 (PKALPESEVL…QIVLHRDGTD (363 aa)). At serine 154 the chain carries Phosphoserine. Coiled coils occupy residues 373–403 (EHKE…YSML) and 478–533 (QAKL…FGAL). The segment at 532-601 (ALPPGTKIPL…PPPPLGFLGG (70 aa)) is disordered. One can recognise an FH1 domain in the interval 540–610 (PLQPSVEGEA…GQSSIPLNLP (71 aa)). Pro residues predominate over residues 553 to 596 (ALPPAPPALSGGVPPPPPPPPPPPPPLPGMPMPFGGPVPPPPPL). Residue serine 604 is modified to Phosphoserine. The FH2 domain occupies 615–1013 (PKKEFKPEIS…EKRARIAKER (399 aa)). 2 coiled-coil regions span residues 887-918 (DKAS…LETF) and 988-1038 (MLAL…GDET). Residues 1036-1066 (DETGVMDSLLEALQSGAAFRDRRKRTPKLKD) enclose the DAD domain. 2 positions are modified to phosphoserine: serine 1072 and serine 1157. Positions 1162-1171 (EALLARLRAL) match the Nuclear export signal motif.

Belongs to the formin homology family. Diaphanous subfamily. Post-translationally, ubiquitinated.

It is found in the cytoplasm. Its subcellular location is the nucleus. Its function is as follows. Actin nucleation and elongation factor required for the assembly of F-actin structures, such as actin cables and stress fibers. Required for cytokinesis, stress fiber formation and transcriptional activation of the serum response factor. Binds to GTP-bound form of Rho and to profilin: acts in a Rho-dependent manner to recruit profilin to the membrane, where it promotes actin polymerization. DFR proteins couple Rho and Src tyrosine kinase during signaling and the regulation of actin dynamics. Also acts as an actin nucleation and elongation factor in the nucleus by promoting nuclear actin polymerization inside the nucleus to drive serum-dependent SRF-MRTFA activity. This Mus musculus (Mouse) protein is Protein diaphanous homolog 3 (Diaph3).